Consider the following 910-residue polypeptide: UPF0182 protein Acid_6445 (910 aa).

The next 7 membrane-spanning stretches (helical) occupy residues 17 to 37 (ITLL…AGYA), 56 to 76 (LYYG…ALWI), 101 to 121 (LALL…WTVV), 157 to 177 (LLRS…WIAA), 210 to 229 (FLRG…FYLG), 252 to 272 (IGLP…AFVA), and 276 to 296 (WFLA…PRIV).

It belongs to the UPF0182 family.

It is found in the cell membrane. This is UPF0182 protein Acid_6445 from Solibacter usitatus (strain Ellin6076).